A 585-amino-acid polypeptide reads, in one-letter code: Protein NRT1/ PTR FAMILY 4.6 (585 aa).

Transmembrane regions (helical) follow at residues 28–48, 75–95, 96–116, 142–162, 184–204, 211–231, 343–363, 391–411, 428–448, 465–485, 508–528, and 554–574; these read GMLAASFVLVVEILENLAYLA, FMGTAFLLALLGGFLSDAFFS, TFQIFLISASIEFLGLIILTI, AMLFVGLYLVALGVGGIKGSL, FFNYFVFCLACGALVAVTFVV, GWEWGFGVSTIAIFVSILIFL, IVLKMLPIFACTIMLNCCLAQ, IFPVVFIMILAPIYDHLIIPF, IGVGLVLSILAMAVAALVEIK, LPVTFLWIALQYLFLGSADLF, SLSWASLAMGYYLSSVIVSIV, and FYWLMCVLSAANFLHYLFWAM.

It belongs to the major facilitator superfamily. Proton-dependent oligopeptide transporter (POT/PTR) (TC 2.A.17) family. As to expression, expressed in root hairs and in epidermis of both root tips and mature regions of roots. Detected in shoots, stems, flowers, siliques and imbibed seeds. Expressed in vascular tissues in cotyledons, trus leaves, hypocotyls, roots and inflorescence stems.

The protein resides in the cell membrane. Functionally, low-affinity proton-dependent nitrate transporter. Involved in constitutive nitrate uptake. Not involved in histidine or dipeptides transport. Involved in (+)-abscisic acid (ABA) transport, but not in gibberellin, indole-3-acetic acid or jasmonic acid import. Mediates cellular ABA uptake. Nitrate does not compete with abscisic acid as a substrate of NPF4.6. In Arabidopsis thaliana (Mouse-ear cress), this protein is Protein NRT1/ PTR FAMILY 4.6 (NPF4.6).